We begin with the raw amino-acid sequence, 124 residues long: Small ribosomal subunit protein uS12 (124 aa).

Asp89 carries the post-translational modification 3-methylthioaspartic acid. Positions 102-124 (LDTSGVNNRKHGRSKYGTKRPKS) are disordered. Residues 109-124 (NRKHGRSKYGTKRPKS) show a composition bias toward basic residues.

This sequence belongs to the universal ribosomal protein uS12 family. As to quaternary structure, part of the 30S ribosomal subunit. Contacts proteins S8 and S17. May interact with IF1 in the 30S initiation complex.

Functionally, with S4 and S5 plays an important role in translational accuracy. In terms of biological role, interacts with and stabilizes bases of the 16S rRNA that are involved in tRNA selection in the A site and with the mRNA backbone. Located at the interface of the 30S and 50S subunits, it traverses the body of the 30S subunit contacting proteins on the other side and probably holding the rRNA structure together. The combined cluster of proteins S8, S12 and S17 appears to hold together the shoulder and platform of the 30S subunit. The sequence is that of Small ribosomal subunit protein uS12 from Francisella philomiragia subsp. philomiragia (strain ATCC 25017 / CCUG 19701 / FSC 153 / O#319-036).